We begin with the raw amino-acid sequence, 504 residues long: Xylose import ATP-binding protein XylG (504 aa).

2 ABC transporter domains span residues 6–243 and 260–504; these read LEMK…VGRE and LKVD…TGGK. ATP is bound at residue 38-45; sequence GENGAGKS.

The protein belongs to the ABC transporter superfamily. Xylose importer (TC 3.A.1.2.4) family. In terms of assembly, the complex is composed of two ATP-binding proteins (XylG), two transmembrane proteins (XylH) and a solute-binding protein (XylF).

It localises to the cell membrane. It catalyses the reaction D-xylose(out) + ATP + H2O = D-xylose(in) + ADP + phosphate + H(+). Functionally, part of the ABC transporter complex XylFGH involved in xylose import. Responsible for energy coupling to the transport system. In Geobacillus kaustophilus (strain HTA426), this protein is Xylose import ATP-binding protein XylG.